The primary structure comprises 116 residues: Large ribosomal subunit protein uL22 (116 aa).

It belongs to the universal ribosomal protein uL22 family. In terms of assembly, part of the 50S ribosomal subunit.

This protein binds specifically to 23S rRNA; its binding is stimulated by other ribosomal proteins, e.g. L4, L17, and L20. It is important during the early stages of 50S assembly. It makes multiple contacts with different domains of the 23S rRNA in the assembled 50S subunit and ribosome. Its function is as follows. The globular domain of the protein is located near the polypeptide exit tunnel on the outside of the subunit, while an extended beta-hairpin is found that lines the wall of the exit tunnel in the center of the 70S ribosome. The polypeptide is Large ribosomal subunit protein uL22 (Sulfurihydrogenibium sp. (strain YO3AOP1)).